We begin with the raw amino-acid sequence, 523 residues long: Dynein regulatory complex subunit 3 (523 aa).

LRR repeat units follow at residues 44 to 65 (DVLS…WQFE), 66 to 87 (NLKK…TNLI), 88 to 109 (HLVW…DTLV), 110 to 131 (NLED…DALV), and 132 to 153 (KLQV…IYLR). The LRRCT domain maps to 166-204 (NPVSEAEEYKMFIYAYLSDLVYLDFRRVDEQMREMAKMK). Coiled coils occupy residues 204-242 (KHQY…AFVE) and 333-393 (LNLN…LVGL).

Belongs to the DRC3 family. As to quaternary structure, component of the nexin-dynein regulatory complex (N-DRC). Interacts with DRC1. Interacts with TCTE1/DRC5. Interacts with DRC7.

It localises to the cytoplasm. The protein resides in the cytoskeleton. Its subcellular location is the cilium axoneme. The protein localises to the cell projection. It is found in the cilium. It localises to the flagellum axoneme. The protein resides in the flagellum. Functionally, component of the nexin-dynein regulatory complex (N-DRC) a key regulator of ciliary/flagellar motility which maintains the alignment and integrity of the distal axoneme and regulates microtubule sliding in motile axonemes. This Mus musculus (Mouse) protein is Dynein regulatory complex subunit 3 (Drc3).